The chain runs to 124 residues: Small ribosomal subunit protein uS11 (124 aa).

The protein belongs to the universal ribosomal protein uS11 family. In terms of assembly, part of the 30S ribosomal subunit.

Its function is as follows. Located on the platform of the 30S subunit. The chain is Small ribosomal subunit protein uS11 from Methanococcus aeolicus (strain ATCC BAA-1280 / DSM 17508 / OCM 812 / Nankai-3).